The chain runs to 317 residues: Apolipoprotein E (317 aa).

The N-terminal stretch at 1-18 (MKVLWAALLVTFLAGCQA) is a signal peptide. 8 consecutive repeat copies span residues 80–101 (TLMD…EQLS), 102–123 (PVAE…ARLG), 124–145 (ADME…AMLG), 146–167 (QSTE…KRLL), 168–189 (RDAD…EGAE), 190–211 (RGVS…VRAA), 212–233 (TVGS…ERLR), and 234–255 (ARME…EQVA). Positions 80-255 (TLMDETMKEL…RLDEVKEQVA (176 aa)) are 8 X 22 AA approximate tandem repeats. Methionine 143 carries the post-translational modification Methionine sulfoxide. At serine 147 the chain carries Phosphoserine. The LDL and other lipoprotein receptors binding stretch occupies residues 158-168 (HLRKLRKRLLR). 162–165 (LRKR) serves as a coordination point for heparin. Residues 210-290 (AATVGSLAGQ…SWFEPLVEDM (81 aa)) are lipid-binding and lipoprotein association. 229 to 236 (GERLRARM) contacts heparin. The interval 266-317 (QQISLQAEAFQARLKSWFEPLVEDMQRQWAGLVEKVQAAVGASTAPVPSDNH) is homooligomerization. The interval 278-290 (RLKSWFEPLVEDM) is specificity for association with VLDL.

This sequence belongs to the apolipoprotein A1/A4/E family. As to quaternary structure, homotetramer. May interact with ABCA1; functionally associated with ABCA1 in the biogenesis of HDLs. May interact with APP/A4 amyloid-beta peptide; the interaction is extremely stable in vitro but its physiological significance is unclear. May interact with MAPT. May interact with MAP2. In the cerebrospinal fluid, interacts with secreted SORL1. Interacts with PMEL; this allows the loading of PMEL luminal fragment on ILVs to induce fibril nucleation. Post-translationally, APOE exists as multiple glycosylated and sialylated glycoforms within cells and in plasma. The extent of glycosylation and sialylation are tissue and context specific. In terms of processing, glycated in plasma VLDL. Phosphorylated by FAM20C in the extracellular medium.

The protein resides in the secreted. It localises to the extracellular space. Its subcellular location is the extracellular matrix. The protein localises to the extracellular vesicle. It is found in the endosome. The protein resides in the multivesicular body. In terms of biological role, APOE is an apolipoprotein, a protein associating with lipid particles, that mainly functions in lipoprotein-mediated lipid transport between organs via the plasma and interstitial fluids. APOE is a core component of plasma lipoproteins and is involved in their production, conversion and clearance. Apolipoproteins are amphipathic molecules that interact both with lipids of the lipoprotein particle core and the aqueous environment of the plasma. As such, APOE associates with chylomicrons, chylomicron remnants, very low density lipoproteins (VLDL) and intermediate density lipoproteins (IDL) but shows a preferential binding to high-density lipoproteins (HDL). It also binds a wide range of cellular receptors including the LDL receptor/LDLR, the LDL receptor-related proteins LRP1, LRP2 and LRP8 and the very low-density lipoprotein receptor/VLDLR that mediate the cellular uptake of the APOE-containing lipoprotein particles. Finally, APOE also has a heparin-binding activity and binds heparan-sulfate proteoglycans on the surface of cells, a property that supports the capture and the receptor-mediated uptake of APOE-containing lipoproteins by cells. A main function of APOE is to mediate lipoprotein clearance through the uptake of chylomicrons, VLDLs, and HDLs by hepatocytes. APOE is also involved in the biosynthesis by the liver of VLDLs as well as their uptake by peripheral tissues ensuring the delivery of triglycerides and energy storage in muscle, heart and adipose tissues. By participating in the lipoprotein-mediated distribution of lipids among tissues, APOE plays a critical role in plasma and tissues lipid homeostasis. APOE is also involved in two steps of reverse cholesterol transport, the HDLs-mediated transport of cholesterol from peripheral tissues to the liver, and thereby plays an important role in cholesterol homeostasis. First, it is functionally associated with ABCA1 in the biogenesis of HDLs in tissues. Second, it is enriched in circulating HDLs and mediates their uptake by hepatocytes. APOE also plays an important role in lipid transport in the central nervous system, regulating neuron survival and sprouting. The chain is Apolipoprotein E (APOE) from Colobus guereza (Mantled guereza).